We begin with the raw amino-acid sequence, 201 residues long: Outer-membrane lipoprotein LolB (201 aa).

The signal sequence occupies residues 1–18 (MKWCRLSIILMSLILLAG). A lipid anchor (N-palmitoyl cysteine) is attached at Cys-19. Cys-19 is lipidated: S-diacylglycerol cysteine.

Belongs to the LolB family. Monomer.

It localises to the cell outer membrane. Its function is as follows. Plays a critical role in the incorporation of lipoproteins in the outer membrane after they are released by the LolA protein. This Nitrosococcus oceani (strain ATCC 19707 / BCRC 17464 / JCM 30415 / NCIMB 11848 / C-107) protein is Outer-membrane lipoprotein LolB.